The primary structure comprises 120 residues: Lysozyme (120 aa).

Residues 1-120 enclose the C-type lysozyme domain; it reads KRFTRCGLVN…NHSNPDISSC (120 aa). 4 cysteine pairs are disulfide-bonded: Cys-6–Cys-120, Cys-27–Cys-110, Cys-62–Cys-76, and Cys-72–Cys-90. Active-site residues include Glu-32 and Asp-50.

Belongs to the glycosyl hydrolase 22 family. Monomer.

The catalysed reaction is Hydrolysis of (1-&gt;4)-beta-linkages between N-acetylmuramic acid and N-acetyl-D-glucosamine residues in a peptidoglycan and between N-acetyl-D-glucosamine residues in chitodextrins.. Functionally, lysozymes have primarily a bacteriolytic function; those in tissues and body fluids are associated with the monocyte-macrophage system and enhance the activity of immunoagents. In Antheraea mylitta (Tasar silkworm), this protein is Lysozyme.